We begin with the raw amino-acid sequence, 492 residues long: Probable cobyric acid synthase (492 aa).

Positions 252-444 constitute a GATase cobBQ-type domain; that stretch reads PIEVNIVKFS…FHGILENFEF (193 aa). The active-site Nucleophile is the cysteine 330. Histidine 436 is an active-site residue.

The protein belongs to the CobB/CobQ family. CobQ subfamily.

The protein operates within cofactor biosynthesis; adenosylcobalamin biosynthesis. Its function is as follows. Catalyzes amidations at positions B, D, E, and G on adenosylcobyrinic A,C-diamide. NH(2) groups are provided by glutamine, and one molecule of ATP is hydrogenolyzed for each amidation. This chain is Probable cobyric acid synthase, found in Methanococcus maripaludis (strain C5 / ATCC BAA-1333).